A 161-amino-acid polypeptide reads, in one-letter code: Phosphopantetheine adenylyltransferase (161 aa).

A substrate-binding site is contributed by T10. ATP is bound by residues 10–11 and H18; that span reads TF. Substrate is bound by residues K42, L74, and R88. ATP contacts are provided by residues 89–91, E99, and 123–129; these read GVR and YIHISST.

Belongs to the bacterial CoaD family. As to quaternary structure, homohexamer. It depends on Mg(2+) as a cofactor.

The protein resides in the cytoplasm. It carries out the reaction (R)-4'-phosphopantetheine + ATP + H(+) = 3'-dephospho-CoA + diphosphate. It participates in cofactor biosynthesis; coenzyme A biosynthesis; CoA from (R)-pantothenate: step 4/5. Its function is as follows. Reversibly transfers an adenylyl group from ATP to 4'-phosphopantetheine, yielding dephospho-CoA (dPCoA) and pyrophosphate. The sequence is that of Phosphopantetheine adenylyltransferase from Aquifex aeolicus (strain VF5).